The primary structure comprises 315 residues: Small ribosomal subunit protein uS3 (315 aa).

One can recognise a KH type-2 domain in the interval 38-106; it reads IRKMMSRGME…QVQLNILEVK (69 aa). A disordered region spans residues 211–315; sequence AEREAQEALQ…VANTPEKAEE (105 aa). The segment covering 222–232 has biased composition (basic residues); sequence QTRRERPRRGP. The segment covering 265–315 has biased composition (low complexity); that stretch reads APAETPAGEAAATEPTAPVAEPATAAASAPAEAASAPAEAAVANTPEKAEE.

The protein belongs to the universal ribosomal protein uS3 family. In terms of assembly, part of the 30S ribosomal subunit. Forms a tight complex with proteins S10 and S14.

Binds the lower part of the 30S subunit head. Binds mRNA in the 70S ribosome, positioning it for translation. The polypeptide is Small ribosomal subunit protein uS3 (Frankia casuarinae (strain DSM 45818 / CECT 9043 / HFP020203 / CcI3)).